Here is a 589-residue protein sequence, read N- to C-terminus: uncharacterized protein (589 aa).

The next 14 membrane-spanning stretches (helical) occupy residues 90–110 (YIVI…QTVI), 128–148 (SWIG…CGIM), 162–182 (IVLF…LWLV), 189–209 (GIGG…ITPL), 217–237 (GCMG…GGAI), 245–265 (WIFF…IFFL), 284–304 (FVGI…LNIG), 311–331 (AHAN…GFVV), 355–375 (VMVT…YIPI), 390–410 (VHTL…GMGI), 418–438 (YPMI…IAIY), 448–468 (GFLA…LIAI), 483–503 (AFML…AVIY), and 545–565 (IRTI…LSFF).

Belongs to the major facilitator superfamily. TCR/Tet family.

It is found in the membrane. This is an uncharacterized protein from Schizosaccharomyces pombe (strain 972 / ATCC 24843) (Fission yeast).